The sequence spans 295 residues: Ribosomal RNA small subunit methyltransferase A (295 aa).

S-adenosyl-L-methionine contacts are provided by Asn-31, Leu-33, Gly-58, Glu-79, Asp-104, and Asn-129.

Belongs to the class I-like SAM-binding methyltransferase superfamily. rRNA adenine N(6)-methyltransferase family. RsmA subfamily.

It localises to the cytoplasm. The catalysed reaction is adenosine(1518)/adenosine(1519) in 16S rRNA + 4 S-adenosyl-L-methionine = N(6)-dimethyladenosine(1518)/N(6)-dimethyladenosine(1519) in 16S rRNA + 4 S-adenosyl-L-homocysteine + 4 H(+). In terms of biological role, specifically dimethylates two adjacent adenosines (A1518 and A1519) in the loop of a conserved hairpin near the 3'-end of 16S rRNA in the 30S particle. May play a critical role in biogenesis of 30S subunits. This is Ribosomal RNA small subunit methyltransferase A from Leuconostoc citreum (strain KM20).